A 264-amino-acid chain; its full sequence is Thymidylate synthase (264 aa).

R21 is a dUMP binding site. Residue H51 participates in (6R)-5,10-methylene-5,6,7,8-tetrahydrofolate binding. Position 126-127 (126-127) interacts with dUMP; it reads RR. C146 (nucleophile) is an active-site residue. Residues 166-169, N177, and 207-209 contribute to the dUMP site; these read RSCD and HLY. D169 contacts (6R)-5,10-methylene-5,6,7,8-tetrahydrofolate. A263 is a binding site for (6R)-5,10-methylene-5,6,7,8-tetrahydrofolate.

It belongs to the thymidylate synthase family. Bacterial-type ThyA subfamily. As to quaternary structure, homodimer.

It is found in the cytoplasm. The catalysed reaction is dUMP + (6R)-5,10-methylene-5,6,7,8-tetrahydrofolate = 7,8-dihydrofolate + dTMP. It functions in the pathway pyrimidine metabolism; dTTP biosynthesis. Functionally, catalyzes the reductive methylation of 2'-deoxyuridine-5'-monophosphate (dUMP) to 2'-deoxythymidine-5'-monophosphate (dTMP) while utilizing 5,10-methylenetetrahydrofolate (mTHF) as the methyl donor and reductant in the reaction, yielding dihydrofolate (DHF) as a by-product. This enzymatic reaction provides an intracellular de novo source of dTMP, an essential precursor for DNA biosynthesis. In Shigella boydii serotype 4 (strain Sb227), this protein is Thymidylate synthase.